The following is a 439-amino-acid chain: Protein PHYTOCHROME KINASE SUBSTRATE 1 (439 aa).

Positions 1-14 are enriched in polar residues; it reads MVTLTPSSASTPKT. Disordered stretches follow at residues 1–22, 54–80, and 100–139; these read MVTL…MKNN, KTLN…APED, and QGSS…SSWN. Basic and acidic residues predominate over residues 63-79; that stretch reads KQEEFGDEKKMVKKAPE. Polar residues-rich tracts occupy residues 100 to 109 and 118 to 139; these read QGSSVLSLTN and DSKQ…SSWN. Serine 238 and serine 244 each carry phosphoserine. 2 disordered regions span residues 259-311 and 355-439; these read LPLP…PTCY and TAKS…LYSQ. A compositionally biased stretch (basic and acidic residues) spans 412-421; that stretch reads TKPKSFETRR. Low complexity predominate over residues 424–439; that stretch reads SNSSISHTQSSLLYSQ.

Belongs to the PKS family. Interacts with PKS2, RPT3, PHOT1, PHOT2 and the C-termini of both phytochromes A (phyA) and B (phyB). Binds both spectral forms of phytochrome, Pr and Pfr. Phosphorylated on Ser and to a lower extent on Thr by phytochromes. Phosphorylation is stimulated twofold by red light. As to expression, expressed in young seedlings in both darkness and light. Moderate in leaves and very low in roots and flowers. Expressed in the elongation zone of the root and hypocotyl.

The protein resides in the cell membrane. May be responsible for light-regulated cytoplasmic sequestration of phytochromes or may be a negative regulator of phytochrome B signaling. Component of the network that modulates the very low-fluence response (VLFR) branch of phyA signaling. Acts positively in PHOT1 signaling. Regulates phytochrome-mediated photomorphogenesis and hypocotyl phototropism. Involved in the control of leaf flattening and leaf positioning. Promotes negative root phototropism and negatively regulates root gravitropism. May act by controlling auxin homeostasis. The protein is Protein PHYTOCHROME KINASE SUBSTRATE 1 (PKS1) of Arabidopsis thaliana (Mouse-ear cress).